The chain runs to 447 residues: UDP-N-acetylmuramate--L-alanine ligase (447 aa).

Residue 115–121 (GAHGKTS) participates in ATP binding.

Belongs to the MurCDEF family.

The protein localises to the cytoplasm. The catalysed reaction is UDP-N-acetyl-alpha-D-muramate + L-alanine + ATP = UDP-N-acetyl-alpha-D-muramoyl-L-alanine + ADP + phosphate + H(+). Its pathway is cell wall biogenesis; peptidoglycan biosynthesis. Its function is as follows. Cell wall formation. This Streptococcus thermophilus (strain CNRZ 1066) protein is UDP-N-acetylmuramate--L-alanine ligase.